The sequence spans 405 residues: Tryptophan synthase beta chain (405 aa).

Lysine 98 is modified (N6-(pyridoxal phosphate)lysine).

Belongs to the TrpB family. As to quaternary structure, tetramer of two alpha and two beta chains. The cofactor is pyridoxal 5'-phosphate.

It carries out the reaction (1S,2R)-1-C-(indol-3-yl)glycerol 3-phosphate + L-serine = D-glyceraldehyde 3-phosphate + L-tryptophan + H2O. It functions in the pathway amino-acid biosynthesis; L-tryptophan biosynthesis; L-tryptophan from chorismate: step 5/5. The beta subunit is responsible for the synthesis of L-tryptophan from indole and L-serine. The protein is Tryptophan synthase beta chain of Xanthomonas oryzae pv. oryzae (strain MAFF 311018).